The chain runs to 212 residues: Acyl-homoserine-lactone synthase (212 aa).

The protein belongs to the autoinducer synthase family.

It catalyses the reaction a fatty acyl-[ACP] + S-adenosyl-L-methionine = an N-acyl-L-homoserine lactone + S-methyl-5'-thioadenosine + holo-[ACP] + H(+). Functionally, required for the synthesis of OHHL (N-(3-oxohexanoyl)-L-homoserine lactone), an autoinducer molecule which binds to ExpR and thus acts in virulence (soft rot disease) through the activation of genes for plant tissue macerating enzymes. This Dickeya dadantii (strain 3937) (Erwinia chrysanthemi (strain 3937)) protein is Acyl-homoserine-lactone synthase (expI).